A 173-amino-acid polypeptide reads, in one-letter code: Nucleoside-triphosphatase THEP1 (173 aa).

ATP is bound by residues 15–22 (GMPGVGKT) and 101–108 (LKIIDEIG).

Belongs to the THEP1 NTPase family.

It catalyses the reaction a ribonucleoside 5'-triphosphate + H2O = a ribonucleoside 5'-diphosphate + phosphate + H(+). Its function is as follows. Has nucleotide phosphatase activity towards ATP, GTP, CTP, TTP and UTP. May hydrolyze nucleoside diphosphates with lower efficiency. In Pyrobaculum aerophilum (strain ATCC 51768 / DSM 7523 / JCM 9630 / CIP 104966 / NBRC 100827 / IM2), this protein is Nucleoside-triphosphatase THEP1.